The chain runs to 566 residues: CTP synthase (566 aa).

The amidoligase domain stretch occupies residues 1–265 (MTKYVFVTGG…DEIVCHKLNL (265 aa)). Serine 13 is a CTP binding site. Residue serine 13 participates in UTP binding. Residues 14–19 (SLGKGI) and aspartate 71 each bind ATP. Residues aspartate 71 and glutamate 139 each contribute to the Mg(2+) site. CTP is bound by residues 146–148 (DIE), 186–191 (KTKPTQ), and lysine 222. Residues 186–191 (KTKPTQ) and lysine 222 contribute to the UTP site. Positions 290-543 (EIALVGKYVD…IEAAAVFADK (254 aa)) constitute a Glutamine amidotransferase type-1 domain. L-glutamine is bound at residue glycine 351. Cysteine 378 serves as the catalytic Nucleophile; for glutamine hydrolysis. L-glutamine-binding positions include 379–382 (LGMQ), glutamate 402, and arginine 469. Residues histidine 516 and glutamate 518 contribute to the active site. A disordered region spans residues 545–566 (PSSEGAISADKPERTTTGAYIQ).

The protein belongs to the CTP synthase family. Homotetramer.

The enzyme catalyses UTP + L-glutamine + ATP + H2O = CTP + L-glutamate + ADP + phosphate + 2 H(+). The catalysed reaction is L-glutamine + H2O = L-glutamate + NH4(+). It carries out the reaction UTP + NH4(+) + ATP = CTP + ADP + phosphate + 2 H(+). Its pathway is pyrimidine metabolism; CTP biosynthesis via de novo pathway; CTP from UDP: step 2/2. With respect to regulation, allosterically activated by GTP, when glutamine is the substrate; GTP has no effect on the reaction when ammonia is the substrate. The allosteric effector GTP functions by stabilizing the protein conformation that binds the tetrahedral intermediate(s) formed during glutamine hydrolysis. Inhibited by the product CTP, via allosteric rather than competitive inhibition. Its function is as follows. Catalyzes the ATP-dependent amination of UTP to CTP with either L-glutamine or ammonia as the source of nitrogen. Regulates intracellular CTP levels through interactions with the four ribonucleotide triphosphates. The chain is CTP synthase from Nitrosospira multiformis (strain ATCC 25196 / NCIMB 11849 / C 71).